Consider the following 304-residue polypeptide: Carnitine monooxygenase reductase subunit (304 aa).

In terms of domain architecture, FAD-binding FR-type spans 1–93; sequence MEQLTPLIKR…SEPKNLFPLA (93 aa). One can recognise a 2Fe-2S ferredoxin-type domain in the interval 219 to 304; the sequence is FTVVLAKSNQ…AKGKKLVLDL (86 aa). Positions 253, 258, 261, and 291 each coordinate [2Fe-2S] cluster.

Belongs to the PDR/VanB family. CntB subfamily. Composed of an oxygenase subunit and a reductase subunit. FMN serves as cofactor. The cofactor is [2Fe-2S] cluster.

It carries out the reaction (R)-carnitine + NADH + O2 + H(+) = (3R)-3-hydroxy-4-oxobutanoate + trimethylamine + NAD(+) + H2O. It catalyses the reaction (R)-carnitine + NADPH + O2 + H(+) = (3R)-3-hydroxy-4-oxobutanoate + trimethylamine + NADP(+) + H2O. The protein operates within amine and polyamine metabolism; carnitine metabolism. With respect to regulation, inhibited by EDTA. Converts carnitine to trimethylamine and malic semialdehyde. Acts on both enantiomers. The chain is Carnitine monooxygenase reductase subunit from Acinetobacter pittii (strain PHEA-2).